The sequence spans 263 residues: S-methyl-5'-thioadenosine phosphorylase (263 aa).

Phosphate contacts are provided by residues T13, 55 to 56 (RH), and 88 to 89 (SA). Substrate is bound at residue M186. T187 contributes to the phosphate binding site. 210–212 (DYD) contacts substrate.

It belongs to the PNP/MTAP phosphorylase family. MTAP subfamily. In terms of assembly, homohexamer. Dimer of a homotrimer.

It carries out the reaction S-methyl-5'-thioadenosine + phosphate = 5-(methylsulfanyl)-alpha-D-ribose 1-phosphate + adenine. It participates in amino-acid biosynthesis; L-methionine biosynthesis via salvage pathway; S-methyl-5-thio-alpha-D-ribose 1-phosphate from S-methyl-5'-thioadenosine (phosphorylase route): step 1/1. In terms of biological role, catalyzes the reversible phosphorylation of S-methyl-5'-thioadenosine (MTA) to adenine and 5-methylthioribose-1-phosphate. Involved in the breakdown of MTA, a major by-product of polyamine biosynthesis. Responsible for the first step in the methionine salvage pathway after MTA has been generated from S-adenosylmethionine. Has broad substrate specificity with 6-aminopurine nucleosides as preferred substrates. The protein is S-methyl-5'-thioadenosine phosphorylase of Nitrosopumilus maritimus (strain SCM1).